The chain runs to 284 residues: Bifunctional protein FolD (284 aa).

NADP(+) contacts are provided by residues 166 to 168 (GAS), serine 191, and isoleucine 232.

This sequence belongs to the tetrahydrofolate dehydrogenase/cyclohydrolase family. In terms of assembly, homodimer.

It catalyses the reaction (6R)-5,10-methylene-5,6,7,8-tetrahydrofolate + NADP(+) = (6R)-5,10-methenyltetrahydrofolate + NADPH. It carries out the reaction (6R)-5,10-methenyltetrahydrofolate + H2O = (6R)-10-formyltetrahydrofolate + H(+). Its pathway is one-carbon metabolism; tetrahydrofolate interconversion. Functionally, catalyzes the oxidation of 5,10-methylenetetrahydrofolate to 5,10-methenyltetrahydrofolate and then the hydrolysis of 5,10-methenyltetrahydrofolate to 10-formyltetrahydrofolate. This chain is Bifunctional protein FolD, found in Thiobacillus denitrificans (strain ATCC 25259 / T1).